The sequence spans 150 residues: Viral late gene transcription factor 2 (150 aa).

It belongs to the orthopoxvirus VLTF-2/OPG126 family. As to quaternary structure, interacts with itself. Interacts with the late transcription factors VLTF-1/OPG093.

In terms of biological role, acts with RNA polymerase to initiate transcription from late gene promoters. The sequence is that of Viral late gene transcription factor 2 (OPG126) from Vaccinia virus (strain Copenhagen) (VACV).